Here is a 115-residue protein sequence, read N- to C-terminus: Na(+)/H(+) antiporter subunit C1 (115 aa).

A run of 3 helical transmembrane segments spans residues 1 to 21 (MEILMIFVCGILTAMSVYLIL), 28 to 48 (IIIGTTLQTHTANLFLITMGG), and 72 to 92 (LILTAIVISFSVTAFFLVLAF).

It belongs to the CPA3 antiporters (TC 2.A.63) subunit C family. May form a heterooligomeric complex that consists of seven subunits: mnhA1, mnhB1, mnhC1, mnhD1, mnhE1, mnhF1 and mnhG1.

The protein resides in the cell membrane. Its function is as follows. Mnh complex is a Na(+)/H(+) antiporter involved in Na(+) excretion. The polypeptide is Na(+)/H(+) antiporter subunit C1 (mnhC1) (Staphylococcus saprophyticus subsp. saprophyticus (strain ATCC 15305 / DSM 20229 / NCIMB 8711 / NCTC 7292 / S-41)).